The chain runs to 500 residues: MLKKLFSFSDRYRILHQTWFAFFLTFVCWFNFAPFATTIGKELHLAPEQIKTLGICNLALTIPARLIIGMLLDRFGPRITYSILLMFAVVPCLATALAQDFNQLVISRLLMGIVGSGFVVGIRMVAEWFQPKEMGIAQGIYGGWGNFGAFGAEFALPILAISTSFFSGGASNWRLAIALVGIITAIYGVIYYNTVQDTPRGKVYKKPKKNGSLEVTSIKSFWAMMISNFGLIFALGLLAWRLEQKKIHFLTLSQMYLTWLVLAGLFAYQSYKAWQVNRELLTGKKTYPVSERFQFGQVALLEFTYITNFGSELAAVSMLPAFFEKTFGLEHVVAGMIAATYPFLNLVSRPSGGLISDKFGSRKWTMTIISVGIGVSYLMAHFINSNWPIPVAIAVTMFAAYFAQAGCGATYSIVPMIKKEATGQIAGNVGAYGNFGGVVYLTIFSLTDAPTLFSTMGIAALICAFMCAFFLKEPKGSFAPAYEGEASETATKSSVFLTEE.

Transmembrane regions (helical) follow at residues 19–39 (WFAF…ATTI), 52–72 (TLGI…GMLL), 79–99 (ITYS…ALAQ), 109–129 (LLMG…AEWF), 147–167 (FGAF…SFFS), 175–195 (LAIA…YNTV), 220–240 (SFWA…LLAW), 247–267 (IHFL…GLFA), 364–384 (WTMT…HFIN), 389–409 (IPVA…GCGA), 425–445 (IAGN…TIFS), and 451–471 (TLFS…AFFL).

The protein belongs to the major facilitator superfamily. Nitrate/nitrite porter (TC 2.A.1.8) family.

Its subcellular location is the cell inner membrane. Functionally, transport system for both nitrate and nitrite, with much higher affinity for nitrate than for nitrite. The protein is Nitrate/nitrite transporter NrtP of Nostoc punctiforme (strain ATCC 29133 / PCC 73102).